We begin with the raw amino-acid sequence, 261 residues long: MAAAVRSVKGLVAVITGGASGLGLSTAKRLVGQGATAVLLDVPNSEGETEAKKLGGNCIFAPANVTSEKEVQAALTLAKEKFGRIDVAVNCAGIAVAIKTYHEKKNQVHTLEDFQRVINVNLIGTFNVIRLVAGVMGQNEPDQGGQRGVIINTASVAAFEGQVGQAAYSASKGGIVGMTLPIARDLAPIGIRVVTIAPGLFATPLLTTLPDKVRNFLASQVPFPSRLGDPAEYAHLVQMVIENPFLNGEVIRLDGAIRMQP.

Ala-2 bears the N-acetylalanine mark. The NAD(+) site is built by Ser-20, Leu-22, and Asp-41. Lys-53 bears the N6-acetyllysine; alternate mark. Residue Lys-53 is modified to N6-succinyllysine; alternate. Val-65 provides a ligand contact to NAD(+). The residue at position 69 (Lys-69) is an N6-acetyllysine. Residue Cys-91 participates in NAD(+) binding. Lys-99 and Lys-105 each carry N6-acetyllysine. Position 155 (Ser-155) interacts with substrate. The NAD(+) site is built by Tyr-168, Lys-172, Phe-201, and Thr-203. The active-site Proton acceptor is Tyr-168. Position 212 is an N6-acetyllysine; alternate (Lys-212). Lys-212 is subject to N6-succinyllysine; alternate.

The protein belongs to the short-chain dehydrogenases/reductases (SDR) family. As to quaternary structure, homotetramer. Component of mitochondrial ribonuclease P, a complex composed of TRMT10C/MRPP1, HSD17B10/MRPP2 and PRORP/MRPP3. Interacts with TRMT10C/MRPP1; forming the MRPP1-MRPP2 subcomplex of the mitochondrial ribonuclease P complex.

Its subcellular location is the mitochondrion. The protein resides in the mitochondrion matrix. It is found in the mitochondrion nucleoid. The enzyme catalyses a (3S)-3-hydroxyacyl-CoA + NAD(+) = a 3-oxoacyl-CoA + NADH + H(+). It carries out the reaction (2S,3S)-3-hydroxy-2-methylbutanoyl-CoA + NAD(+) = 2-methyl-3-oxobutanoyl-CoA + NADH + H(+). The catalysed reaction is testosterone + NAD(+) = androst-4-ene-3,17-dione + NADH + H(+). It catalyses the reaction 5alpha-androstane-3alpha,17beta-diol + NAD(+) = 17beta-hydroxy-5alpha-androstan-3-one + NADH + H(+). The enzyme catalyses 17beta-estradiol + NAD(+) = estrone + NADH + H(+). It carries out the reaction cholate + NAD(+) = 3alpha,12alpha-dihydroxy-7-oxo-5beta-cholanate + NADH + H(+). The catalysed reaction is (3S)-3-hydroxybutanoyl-CoA + NAD(+) = acetoacetyl-CoA + NADH + H(+). It catalyses the reaction (3S)-hydroxyoctanoyl-CoA + NAD(+) = 3-oxooctanoyl-CoA + NADH + H(+). The enzyme catalyses (3S)-hydroxyhexadecanoyl-CoA + NAD(+) = 3-oxohexadecanoyl-CoA + NADH + H(+). It carries out the reaction 17beta-hydroxy-5alpha-androstan-3-one + NAD(+) = 5alpha-androstan-3,17-dione + NADH + H(+). The catalysed reaction is 5alpha-pregnan-20beta-ol-3-one + NAD(+) = 5alpha-pregnane-3,20-dione + NADH + H(+). It catalyses the reaction 3alpha-hydroxy-5alpha-pregnan-20-one + NAD(+) = 5alpha-pregnane-3,20-dione + NADH + H(+). The enzyme catalyses cortisone + NAD(+) = 17alpha-hydroxypregn-4-en-3,11,20-trione-21-al + NADH + H(+). It carries out the reaction 11-dehydrocorticosterone + NAD(+) = pregn-4-ene-3,11,20,21-tetraone + NADH + H(+). The catalysed reaction is cortisol + NAD(+) = 11beta,17alpha-dihydroxypregn-4-ene-3,20,21-trione + NADH + H(+). It catalyses the reaction chenodeoxycholate + NAD(+) = 7-oxolithocholate + NADH + H(+). The enzyme catalyses ursodeoxycholate + NAD(+) = 7-oxolithocholate + NADH + H(+). It carries out the reaction 3beta,7beta-dihydroxy-5beta-cholan-24-oate + NAD(+) = 3beta-hydroxy-7-oxo-5beta-cholan-24-oate + NADH + H(+). Its pathway is amino-acid degradation; L-isoleucine degradation. It functions in the pathway lipid metabolism; fatty acid beta-oxidation. The protein operates within steroid metabolism. It participates in lipid metabolism; bile acid biosynthesis. Functionally, mitochondrial dehydrogenase involved in pathways of fatty acid, branched-chain amino acid and steroid metabolism. Acts as (S)-3-hydroxyacyl-CoA dehydrogenase in mitochondrial fatty acid beta-oxidation, a major degradation pathway of fatty acids. Catalyzes the third step in the beta-oxidation cycle, namely the reversible conversion of (S)-3-hydroxyacyl-CoA to 3-ketoacyl-CoA. Preferentially accepts straight medium- and short-chain acyl-CoA substrates with highest efficiency for (3S)-hydroxybutanoyl-CoA. Acts as 3-hydroxy-2-methylbutyryl-CoA dehydrogenase in branched-chain amino acid catabolic pathway. Catalyzes the oxidation of 3-hydroxy-2-methylbutanoyl-CoA into 2-methyl-3-oxobutanoyl-CoA, a step in isoleucine degradation pathway. Has hydroxysteroid dehydrogenase activity toward steroid hormones and bile acids. Catalyzes the oxidation of 3alpha-, 17beta-, 20beta- and 21-hydroxysteroids and 7alpha- and 7beta-hydroxy bile acids. Oxidizes allopregnanolone/brexanolone at the 3alpha-hydroxyl group, which is known to be critical for the activation of gamma-aminobutyric acid receptors (GABAARs) chloride channel. Has phospholipase C-like activity toward cardiolipin and its oxidized species. Likely oxidizes the 2'-hydroxyl in the head group of cardiolipin to form a ketone intermediate that undergoes nucleophilic attack by water and fragments into diacylglycerol, dihydroxyacetone and orthophosphate. Has higher affinity for cardiolipin with oxidized fatty acids and may degrade these species during the oxidative stress response to protect cells from apoptosis. By interacting with intracellular amyloid-beta, it may contribute to the neuronal dysfunction associated with Alzheimer disease (AD). Essential for structural and functional integrity of mitochondria. Its function is as follows. In addition to mitochondrial dehydrogenase activity, moonlights as a component of mitochondrial ribonuclease P, a complex that cleaves tRNA molecules in their 5'-ends. Together with TRMT10C/MRPP1, forms a subcomplex of the mitochondrial ribonuclease P, named MRPP1-MRPP2 subcomplex, which displays functions that are independent of the ribonuclease P activity. The MRPP1-MRPP2 subcomplex catalyzes the formation of N(1)-methylguanine and N(1)-methyladenine at position 9 (m1G9 and m1A9, respectively) in tRNAs; HSD17B10/MRPP2 acting as a non-catalytic subunit. The MRPP1-MRPP2 subcomplex also acts as a tRNA maturation platform: following 5'-end cleavage by the mitochondrial ribonuclease P complex, the MRPP1-MRPP2 subcomplex enhances the efficiency of 3'-processing catalyzed by ELAC2, retains the tRNA product after ELAC2 processing and presents the nascent tRNA to the mitochondrial CCA tRNA nucleotidyltransferase TRNT1 enzyme. Associates with mitochondrial DNA complexes at the nucleoids to initiate RNA processing and ribosome assembly. The chain is 3-hydroxyacyl-CoA dehydrogenase type-2 (Hsd17b10) from Rattus norvegicus (Rat).